The primary structure comprises 71 residues: MGYSSSSRIGLCLFLFFTFALLSSARISLSFSENEMTVVPERSLMVSTNDYSDPTANGRHDPPRGGRGRRR.

The signal sequence occupies residues 1-25; sequence MGYSSSSRIGLCLFLFFTFALLSSA. Residues 26 to 49 constitute a propeptide that is removed on maturation; it reads RISLSFSENEMTVVPERSLMVSTN. Residues 47-71 form a disordered region; the sequence is STNDYSDPTANGRHDPPRGGRGRRR. Position 51 is a sulfotyrosine (Tyr-51). Pro-63 is modified (4-hydroxyproline). O-linked (Ara...) hydroxyproline glycosylation occurs at Pro-63. The propeptide occupies 66 to 71; sequence GRGRRR.

Belongs to the sulfated-peptide plant hormone family. Post-translationally, the sulfation and the glycosylation are required for full activity.

It localises to the secreted. In terms of biological role, promotes cellular proliferation and expansion. This chain is Protein PSY3 (PSY3), found in Arabidopsis thaliana (Mouse-ear cress).